A 469-amino-acid polypeptide reads, in one-letter code: Probable indole-3-acetic acid-amido synthetase GH3.13 (469 aa).

Positions Met1–Ala26 are disordered. Over residues Ala9–Ala18 the composition is skewed to basic and acidic residues.

Belongs to the IAA-amido conjugating enzyme family.

Functionally, may catalyze the synthesis of indole-3-acetic acid (IAA)-amino acid conjugates, providing a mechanism for the plant to cope with the presence of excess auxin. The protein is Probable indole-3-acetic acid-amido synthetase GH3.13 (GH3.13) of Oryza sativa subsp. japonica (Rice).